The sequence spans 363 residues: Phosphoserine aminotransferase (363 aa).

Arginine 42 serves as a coordination point for L-glutamate. Residues 76 to 77 (GR), tryptophan 102, threonine 156, aspartate 175, and glutamine 198 each bind pyridoxal 5'-phosphate. Lysine 199 bears the N6-(pyridoxal phosphate)lysine mark. Residue 240-241 (NT) coordinates pyridoxal 5'-phosphate.

This sequence belongs to the class-V pyridoxal-phosphate-dependent aminotransferase family. SerC subfamily. As to quaternary structure, homodimer. Requires pyridoxal 5'-phosphate as cofactor.

The protein localises to the cytoplasm. It carries out the reaction O-phospho-L-serine + 2-oxoglutarate = 3-phosphooxypyruvate + L-glutamate. The enzyme catalyses 4-(phosphooxy)-L-threonine + 2-oxoglutarate = (R)-3-hydroxy-2-oxo-4-phosphooxybutanoate + L-glutamate. It functions in the pathway amino-acid biosynthesis; L-serine biosynthesis; L-serine from 3-phospho-D-glycerate: step 2/3. It participates in cofactor biosynthesis; pyridoxine 5'-phosphate biosynthesis; pyridoxine 5'-phosphate from D-erythrose 4-phosphate: step 3/5. Its function is as follows. Catalyzes the reversible conversion of 3-phosphohydroxypyruvate to phosphoserine and of 3-hydroxy-2-oxo-4-phosphonooxybutanoate to phosphohydroxythreonine. The sequence is that of Phosphoserine aminotransferase from Shewanella baltica (strain OS195).